We begin with the raw amino-acid sequence, 471 residues long: Trigger factor (471 aa).

One can recognise a PPIase FKBP-type domain in the interval 166 to 245 (DDFITIDINA…LTAVKVRELP (80 aa)). The disordered stretch occupies residues 442 to 471 (AAGVTGEDDDTEAEEERVTVSADDPGAARF). Residues 447–456 (GEDDDTEAEE) show a composition bias toward acidic residues.

It belongs to the FKBP-type PPIase family. Tig subfamily.

It localises to the cytoplasm. It catalyses the reaction [protein]-peptidylproline (omega=180) = [protein]-peptidylproline (omega=0). Its function is as follows. Involved in protein export. Acts as a chaperone by maintaining the newly synthesized protein in an open conformation. Functions as a peptidyl-prolyl cis-trans isomerase. This chain is Trigger factor, found in Renibacterium salmoninarum (strain ATCC 33209 / DSM 20767 / JCM 11484 / NBRC 15589 / NCIMB 2235).